Consider the following 567-residue polypeptide: Urease subunit alpha (567 aa).

The 439-residue stretch at 129–567 (GGIDTHIHWI…LPMAQRYFLF (439 aa)) folds into the Urease domain. Residues H134, H136, and K217 each coordinate Ni(2+). K217 is modified (N6-carboxylysine). H219 is a substrate binding site. H246 and H272 together coordinate Ni(2+). The active-site Proton donor is the H320. Position 360 (D360) interacts with Ni(2+).

The protein belongs to the metallo-dependent hydrolases superfamily. Urease alpha subunit family. As to quaternary structure, heterotrimer of UreA (gamma), UreB (beta) and UreC (alpha) subunits. Three heterotrimers associate to form the active enzyme. Ni cation is required as a cofactor. Post-translationally, carboxylation allows a single lysine to coordinate two nickel ions.

It localises to the cytoplasm. The catalysed reaction is urea + 2 H2O + H(+) = hydrogencarbonate + 2 NH4(+). It participates in nitrogen metabolism; urea degradation; CO(2) and NH(3) from urea (urease route): step 1/1. The protein is Urease subunit alpha of Klebsiella pneumoniae (strain 342).